The primary structure comprises 223 residues: Deoxyribose-phosphate aldolase (223 aa).

Asp-92 functions as the Proton donor/acceptor in the catalytic mechanism. Lys-158 functions as the Schiff-base intermediate with acetaldehyde in the catalytic mechanism. Catalysis depends on Lys-188, which acts as the Proton donor/acceptor.

The protein belongs to the DeoC/FbaB aldolase family. DeoC type 1 subfamily.

The protein localises to the cytoplasm. It carries out the reaction 2-deoxy-D-ribose 5-phosphate = D-glyceraldehyde 3-phosphate + acetaldehyde. Its pathway is carbohydrate degradation; 2-deoxy-D-ribose 1-phosphate degradation; D-glyceraldehyde 3-phosphate and acetaldehyde from 2-deoxy-alpha-D-ribose 1-phosphate: step 2/2. In terms of biological role, catalyzes a reversible aldol reaction between acetaldehyde and D-glyceraldehyde 3-phosphate to generate 2-deoxy-D-ribose 5-phosphate. In Mycolicibacterium paratuberculosis (strain ATCC BAA-968 / K-10) (Mycobacterium paratuberculosis), this protein is Deoxyribose-phosphate aldolase.